Reading from the N-terminus, the 586-residue chain is Proton channel OTOP1 (586 aa).

Over 1 to 52 (MVEHGGTDSMWLNKYNPAAASSASSSSSSDAENKLFSRLKVSLTKKYPQKNA) the chain is Cytoplasmic. Residues 53-74 (ELLSAQYGTNLLLLGVSVMLAL) form a helical membrane-spanning segment. Residues 75–82 (AAQSGPVK) lie on the Extracellular side of the membrane. A helical membrane pass occupies residues 83 to 106 (EEHLLSFITVLMLVQLVWMLCYMI). Residues 107-124 (RRERERSPVPERDAHAGA) are Cytoplasmic-facing. A helical transmembrane segment spans residues 125–147 (SWIRGGLTMLALLSLIMDAFRIG). Topologically, residues 148–157 (YFVGYHSCIS) are extracellular. The chain crosses the membrane as a helical span at residues 158–182 (AALGVYPIVHALHTISQVHFLWFHI). Topologically, residues 183 to 190 (KDVIKKYE) are cytoplasmic. A helical membrane pass occupies residues 191 to 217 (TFERFGVIHAVFTNLLLWCNGVMSETE). Over 218-255 (HFMHNHRRRLIEMGYANLSTVDVQPHCNCTTSVCSMFS) the chain is Extracellular. A helical transmembrane segment spans residues 256 to 281 (TSLYYLYPFNIEYHIFVSAMLFVMWK). Topologically, residues 282–303 (NIGRTLDRHSNRKRRSTGSTGL) are cytoplasmic. Residues 304–326 (LLGPLGGLVALASSVSVLVVYLI) traverse the membrane as a helical segment. Over 327–336 (HLEKTEEMHE) the chain is Extracellular. A helical membrane pass occupies residues 337–362 (AAVSMFYYYGVAMMACMCVGSGTGLL). At 363-380 (VYRMENRPMDTGSNPART) the chain is on the cytoplasmic side. A helical transmembrane segment spans residues 381 to 405 (LDTELLLASSLGSWLMSWCSVVASV). Over 406–417 (AEAGQKSPSFSW) the chain is Extracellular. A helical transmembrane segment spans residues 418–438 (TSLTYSLLLVLEKCIQNLFIV). At 439–518 (ESLYRRHSEE…TPGRKRQILK (80 aa)) the chain is on the cytoplasmic side. Residues 484–505 (PAAGSHALSRKQPDAPLPAGQR) are disordered. The chain crosses the membrane as a helical span at residues 519–537 (NICMFLFMCNISLWILPAF). Residues 538–555 (GCRPQYDNPLENETFGTS) lie on the Extracellular side of the membrane. Residues 556-579 (VWTTVLNVAIPLNLFYRMHSVASL) traverse the membrane as a helical segment. Residues 580-586 (FEVFRKV) lie on the Cytoplasmic side of the membrane.

Belongs to the otopetrin family. As to quaternary structure, homodimer.

It is found in the cell membrane. The protein resides in the cell projection. It localises to the microvillus. It carries out the reaction H(+)(in) = H(+)(out). Activated by both acid and alkali, with proton influx in response to extracellular acid and proton efflux during alkali stimulation. Inhibited by Zn(2+); this inhibition is thought to be pH-sensitive. Currents evoked in response to mild acid (pH 6.0) stimulus may also be mildly potentiated by exposure to Zn(2+). Activated by NH(4)Cl. Functionally, proton-selective ion channel. Biphasically modulated by acid and alkali, mediating proton influx and efflux in response to extracellular acid and base stimulation, respectively. May be involved in acid and base perception. Sensor for ammonium chloride (NH(4)Cl) in taste receptor cells. NH(4)Cl acts by increasing the intracellular pH, thereby generating a driving force for proton entry through OTOP1 channel. Plays a role in the regulation of Ca(2+) flux in response to purigenic (ATP, ADP and UDP) stimuli, leading to increase in cytosolic Ca(2+) due to influx of extracellular calcium. May play this role by inhibiting P2Y purinoceptor-mediated Ca(2+) release in a Ca(2+)-dependent manner and promote an influx of Ca(2+) in response to ATP. Through this mechanism and possibly others, plays a role in the formation and function of calcium carbonate-based structures in the vestibular system of the inner ear, called otoconia, that sense gravity and linear acceleration. The polypeptide is Proton channel OTOP1 (Danio rerio (Zebrafish)).